The sequence spans 395 residues: 8-amino-3,8-dideoxy-alpha-D-manno-octulosonate transaminase (395 aa).

An N6-(pyridoxal phosphate)lysine modification is found at Lys186.

This sequence belongs to the DegT/DnrJ/EryC1 family. Requires pyridoxal 5'-phosphate as cofactor.

It carries out the reaction 8-amino-3,8-dideoxy-alpha-D-manno-octulosonate + 2-oxoglutarate = 3,8-dideoxy-8-oxo-alpha-D-manno-octulosonate + L-glutamate. Its pathway is bacterial outer membrane biogenesis; lipopolysaccharide biosynthesis. Its function is as follows. Catalyzes the second (last) step of the biosynthesis of Kdo8N (8-amino-3,8-dideoxy-D-manno-octulosonate) from Kdo (3-deoxy-D-manno-octulosonate). The protein is 8-amino-3,8-dideoxy-alpha-D-manno-octulosonate transaminase of Shewanella oneidensis (strain ATCC 700550 / JCM 31522 / CIP 106686 / LMG 19005 / NCIMB 14063 / MR-1).